A 181-amino-acid polypeptide reads, in one-letter code: Ribonuclease HII (181 aa).

Residues 1–181 (MICGIDEVGR…SLHRKNFKLI (181 aa)) enclose the RNase H type-2 domain. A divalent metal cation is bound by residues Asp-6, Glu-7, and Asp-98.

This sequence belongs to the RNase HII family. The cofactor is Mn(2+). Mg(2+) serves as cofactor.

The protein localises to the cytoplasm. The enzyme catalyses Endonucleolytic cleavage to 5'-phosphomonoester.. Functionally, endonuclease that specifically degrades the RNA of RNA-DNA hybrids. The protein is Ribonuclease HII of Borreliella burgdorferi (strain ZS7) (Borrelia burgdorferi).